The chain runs to 732 residues: Acylamino-acid-releasing enzyme (732 aa).

The residue at position 1 (Met-1) is a Blocked amino end (Met); alternate. Met-1 bears the N-acetylmethionine; alternate mark. Phosphoserine occurs at positions 185 and 187. Active-site charge relay system residues include Ser-587, Asp-675, and His-707.

It belongs to the peptidase S9C family. In terms of assembly, homotetramer.

It localises to the cytoplasm. It catalyses the reaction Cleavage of an N-acetyl or N-formyl amino acid from the N-terminus of a polypeptide.. Homotetramerization is required for activity. Tetramerization results in the formation of a gated channel which is involved in substrate selection and substrate access to the catalytic sites. Functionally, this enzyme catalyzes the hydrolysis of the N-terminal peptide bond of an N-acetylated peptide to generate an N-acetylated amino acid and a peptide with a free N-terminus. It preferentially cleaves off Ac-Ala, Ac-Met and Ac-Ser. Also, involved in the degradation of oxidized and glycated proteins. The polypeptide is Acylamino-acid-releasing enzyme (Apeh) (Rattus norvegicus (Rat)).